The following is a 267-amino-acid chain: Octanoyltransferase (267 aa).

Positions 77–265 (GTASELVWLV…AFESVFGPRQ (189 aa)) constitute a BPL/LPL catalytic domain. Residues 116 to 123 (RGGEYTYH), 196 to 198 (AIG), and 209 to 211 (GIA) each bind substrate. C227 serves as the catalytic Acyl-thioester intermediate.

The protein belongs to the LipB family.

The protein resides in the cytoplasm. It catalyses the reaction octanoyl-[ACP] + L-lysyl-[protein] = N(6)-octanoyl-L-lysyl-[protein] + holo-[ACP] + H(+). The protein operates within protein modification; protein lipoylation via endogenous pathway; protein N(6)-(lipoyl)lysine from octanoyl-[acyl-carrier-protein]: step 1/2. In terms of biological role, catalyzes the transfer of endogenously produced octanoic acid from octanoyl-acyl-carrier-protein onto the lipoyl domains of lipoate-dependent enzymes. Lipoyl-ACP can also act as a substrate although octanoyl-ACP is likely to be the physiological substrate. The sequence is that of Octanoyltransferase from Brucella suis biovar 1 (strain 1330).